The primary structure comprises 248 residues: FCS-Like Zinc finger 14 (248 aa).

The span at 85-94 (VCRSEPNQPG) shows a compositional bias: polar residues. Positions 85–108 (VCRSEPNQPGRSDPVQFMSHGGST) are disordered. The FLZ-type zinc-finger motif lies at 181–224 (GFLNSCYLCRKKLHGQDIFIYRGEKAFCSTECRSSHIANDERKE).

It belongs to the FLZ family. As to quaternary structure, interacts with KIN10 and KIN11 via its FLZ-type zinc finger domain. Interacts with KINB1, KINB2 and KINB3 via its N-terminal part.

It is found in the cytoplasm. Its subcellular location is the nucleus. In terms of biological role, may act as an adapter to facilitate the interaction of SnRK1 complex with effector proteins, conferring tissue- and stimulus-type specific differences in the SnRK1 regulation pathway. The protein is FCS-Like Zinc finger 14 of Arabidopsis thaliana (Mouse-ear cress).